Consider the following 1109-residue polypeptide: Protein argonaute 3 (1109 aa).

Basic and acidic residues predominate over residues 1 to 13 (MAGRGGRDPRRGY). 2 disordered regions span residues 1–83 (MAGR…GLVR) and 125–220 (DHRD…PLSK). 3 stretches are compositionally biased toward gly residues: residues 14-30 (DGGYGYPRGGGGQGGTN), 37-54 (RGGGRNGPRGGRFPGGRG), and 62-83 (DVLGGGQGGGRGTTAGAGGLVR). The segment covering 125–134 (DHRDQHDHQS) has biased composition (basic and acidic residues). Over residues 135 to 161 (QRHHHRHHHHQRQRHHHHHQRQQRRGS) the composition is skewed to basic residues. The PAZ domain occupies 411 to 521 (SVLDLVKTMK…VPIEFCNIPE (111 aa)). Positions 527-545 (VARLDDKKSDNKGEQEKPS) are enriched in basic and acidic residues. The interval 527–548 (VARLDDKKSDNKGEQEKPSTKT) is disordered. The Piwi domain occupies 720 to 1023 (LLFCPMLNRC…AAYRGRLYYE (304 aa)).

Belongs to the argonaute family. Ago subfamily.

Its function is as follows. Probably involved in the RNA silencing pathway. May bind to short RNAs such as microRNAs (miRNAs) or short interfering RNAs (siRNAs), and represses the translation of mRNAs which are complementary to them. The sequence is that of Protein argonaute 3 (AGO3) from Oryza sativa subsp. japonica (Rice).